We begin with the raw amino-acid sequence, 57 residues long: Potassium channel toxin MeuTXKalpha2 (57 aa).

A signal peptide spans 1 to 19; that stretch reads MSRLYAIILIALVFNVIMT. The propeptide occupies 20 to 28; it reads IMPDMKVEA. Cystine bridges form between cysteine 31-cysteine 47, cysteine 34-cysteine 52, and cysteine 38-cysteine 54.

It belongs to the short scorpion toxin superfamily. Potassium channel inhibitor family. Alpha-KTx 08 subfamily. Expressed by the venom gland.

The protein localises to the secreted. Its function is as follows. Inhibits Kv1.1/KCNA1, Kv1.3/KCNA3 and Shaker potassium channels. In Mesobuthus eupeus (Lesser Asian scorpion), this protein is Potassium channel toxin MeuTXKalpha2.